Consider the following 352-residue polypeptide: Galactokinase (352 aa).

17–20 (EHTD) lines the substrate pocket. ATP-binding positions include Ser49 and 101 to 107 (GAGLSSS). Residues Ser107 and Glu139 each coordinate Mg(2+). Residue Asp151 is the Proton acceptor of the active site. Position 200 (Tyr200) interacts with substrate.

Belongs to the GHMP kinase family. GalK subfamily. As to quaternary structure, monomer.

It is found in the cytoplasm. It catalyses the reaction alpha-D-galactose + ATP = alpha-D-galactose 1-phosphate + ADP + H(+). Its pathway is carbohydrate metabolism; galactose metabolism. Catalyzes the transfer of the gamma-phosphate of ATP to D-galactose to form alpha-D-galactose-1-phosphate (Gal-1-P). Is very specific for its substrate, since it is not able to use D-glucose, D-fructose, D-mannose, 2-deoxy-D-glucose, and D-glucosamine as substrates. The chain is Galactokinase from Pyrococcus furiosus (strain ATCC 43587 / DSM 3638 / JCM 8422 / Vc1).